The primary structure comprises 1063 residues: TBC1 domain family member 31 (1063 aa).

WD repeat units lie at residues 33–74, 75–116, 117–157, 158–200, 201–248, 249–296, and 297–334; these read HNTS…LCGN, RFNL…TVTK, ELVS…LDTF, QRKR…CDTL, VCKY…AKQL, FRII…IQTC, and KLLF…NIYS. The 176-residue stretch at 424-599 folds into the Rab-GAP TBC domain; that stretch reads EFPTKYRMFI…KLFDNVFSNH (176 aa). Residues 699 to 951 are a coiled coil; sequence ELDYLRERQA…EAKKWEEAEE (253 aa). The segment at 1050–1053 is mediates direct interaction with PJA2; it reads QAQN.

Interacts with PJA2; the interaction is direct and recruits PJA2 to centrosomes. Interacts with OFD1; regulates its activity in cilium assembly. Interacts with PRKACA.

It localises to the cytoplasm. Its subcellular location is the cytoskeleton. It is found in the microtubule organizing center. The protein resides in the centrosome. The protein localises to the centriolar satellite. It localises to the cilium basal body. Molecular adapter which is involved in cilium biogenesis. Part of a functional complex including OFD1 a centriolar protein involved in cilium assembly. Could regulate the cAMP-dependent phosphorylation of OFD1, and its subsequent ubiquitination by PJA2 which ultimately leads to its proteasomal degradation. The chain is TBC1 domain family member 31 from Bos taurus (Bovine).